The chain runs to 106 residues: uncharacterized protein (106 aa).

The Cytoplasmic portion of the chain corresponds to 1–6 (MYQTSP). A helical transmembrane segment spans residues 7–27 (LSLFYFQVLVPKFLECFLCFP). Over 28–32 (YHKIS) the chain is Extracellular. A helical transmembrane segment spans residues 33–53 (LVALLSFFYCQLQTNMIILLS). Residues 54-73 (QIKRFLYRQIMIALKIKAKK) lie on the Cytoplasmic side of the membrane. A helical transmembrane segment spans residues 74-94 (FWFIFKYFNVSCDARLFNELF). The Extracellular portion of the chain corresponds to 95 to 106 (YIFQTYVSVDSK).

The protein localises to the membrane. This is an uncharacterized protein from Saccharomyces cerevisiae (strain ATCC 204508 / S288c) (Baker's yeast).